The following is a 291-amino-acid chain: uncharacterized protein (291 aa).

NAD(+)-binding positions include 5 to 19 and Thr-97; that span reads AFIG…MAGH. Residue Lys-172 is part of the active site. Lys-240 contributes to the NAD(+) binding site.

Belongs to the HIBADH-related family.

This is an uncharacterized protein from Shewanella frigidimarina (strain NCIMB 400).